The primary structure comprises 306 residues: 4-hydroxy-3-methylbut-2-enyl diphosphate reductase 1 (306 aa).

C10 is a [4Fe-4S] cluster binding site. (2E)-4-hydroxy-3-methylbut-2-enyl diphosphate is bound by residues H39 and H72. Residues H39 and H72 each contribute to the dimethylallyl diphosphate site. Residues H39 and H72 each coordinate isopentenyl diphosphate. Residue C94 participates in [4Fe-4S] cluster binding. Residue H122 participates in (2E)-4-hydroxy-3-methylbut-2-enyl diphosphate binding. H122 contacts dimethylallyl diphosphate. Position 122 (H122) interacts with isopentenyl diphosphate. The Proton donor role is filled by E124. Position 162 (T162) interacts with (2E)-4-hydroxy-3-methylbut-2-enyl diphosphate. Residue C192 participates in [4Fe-4S] cluster binding. The (2E)-4-hydroxy-3-methylbut-2-enyl diphosphate site is built by S220, S221, N222, and S264. Dimethylallyl diphosphate is bound by residues S220, S221, N222, and S264. S220, S221, N222, and S264 together coordinate isopentenyl diphosphate.

It belongs to the IspH family. [4Fe-4S] cluster is required as a cofactor.

The catalysed reaction is isopentenyl diphosphate + 2 oxidized [2Fe-2S]-[ferredoxin] + H2O = (2E)-4-hydroxy-3-methylbut-2-enyl diphosphate + 2 reduced [2Fe-2S]-[ferredoxin] + 2 H(+). It carries out the reaction dimethylallyl diphosphate + 2 oxidized [2Fe-2S]-[ferredoxin] + H2O = (2E)-4-hydroxy-3-methylbut-2-enyl diphosphate + 2 reduced [2Fe-2S]-[ferredoxin] + 2 H(+). It functions in the pathway isoprenoid biosynthesis; dimethylallyl diphosphate biosynthesis; dimethylallyl diphosphate from (2E)-4-hydroxy-3-methylbutenyl diphosphate: step 1/1. Its pathway is isoprenoid biosynthesis; isopentenyl diphosphate biosynthesis via DXP pathway; isopentenyl diphosphate from 1-deoxy-D-xylulose 5-phosphate: step 6/6. Catalyzes the conversion of 1-hydroxy-2-methyl-2-(E)-butenyl 4-diphosphate (HMBPP) into a mixture of isopentenyl diphosphate (IPP) and dimethylallyl diphosphate (DMAPP). Acts in the terminal step of the DOXP/MEP pathway for isoprenoid precursor biosynthesis. The chain is 4-hydroxy-3-methylbut-2-enyl diphosphate reductase 1 from Rhodopseudomonas palustris (strain ATCC BAA-98 / CGA009).